The primary structure comprises 181 residues: Adenine phosphoribosyltransferase (181 aa).

Belongs to the purine/pyrimidine phosphoribosyltransferase family. In terms of assembly, homodimer.

It localises to the cytoplasm. It catalyses the reaction AMP + diphosphate = 5-phospho-alpha-D-ribose 1-diphosphate + adenine. The protein operates within purine metabolism; AMP biosynthesis via salvage pathway; AMP from adenine: step 1/1. Its function is as follows. Catalyzes a salvage reaction resulting in the formation of AMP, that is energically less costly than de novo synthesis. The sequence is that of Adenine phosphoribosyltransferase from Rhodopseudomonas palustris (strain ATCC BAA-98 / CGA009).